The following is a 287-amino-acid chain: Phosphatidylglycerol--prolipoprotein diacylglyceryl transferase (287 aa).

The next 4 helical transmembrane spans lie at 15-35, 55-75, 90-110, and 117-137; these read IGPLSIYWYGIIIAFGAILAI, FVMFAVPIAIIFARIYYVFFE, IWEGGIAIHGAVIGGVITAIV, and VSFWQIADIVAPSLILGQAIG. Residue Arg-138 participates in a 1,2-diacyl-sn-glycero-3-phospho-(1'-sn-glycerol) binding. A run of 2 helical transmembrane segments spans residues 180–200 and 238–258; these read HPTFLYESVWNILIFVGLLLL and IIRTAQFISILIIIVSIIFII.

It belongs to the Lgt family.

The protein localises to the cell membrane. The enzyme catalyses L-cysteinyl-[prolipoprotein] + a 1,2-diacyl-sn-glycero-3-phospho-(1'-sn-glycerol) = an S-1,2-diacyl-sn-glyceryl-L-cysteinyl-[prolipoprotein] + sn-glycerol 1-phosphate + H(+). Its pathway is protein modification; lipoprotein biosynthesis (diacylglyceryl transfer). Its function is as follows. Catalyzes the transfer of the diacylglyceryl group from phosphatidylglycerol to the sulfhydryl group of the N-terminal cysteine of a prolipoprotein, the first step in the formation of mature lipoproteins. The polypeptide is Phosphatidylglycerol--prolipoprotein diacylglyceryl transferase (Oceanobacillus iheyensis (strain DSM 14371 / CIP 107618 / JCM 11309 / KCTC 3954 / HTE831)).